The chain runs to 319 residues: Homoserine O-acetyltransferase (319 aa).

Cys-142 (acyl-thioester intermediate) is an active-site residue. Substrate is bound by residues Lys-163 and Ser-192. The active-site Proton acceptor is the His-235. The active site involves Glu-237. Residue Arg-249 coordinates substrate.

Belongs to the MetA family.

It localises to the cytoplasm. The catalysed reaction is L-homoserine + acetyl-CoA = O-acetyl-L-homoserine + CoA. Its pathway is amino-acid biosynthesis; L-methionine biosynthesis via de novo pathway; O-acetyl-L-homoserine from L-homoserine: step 1/1. Functionally, transfers an acetyl group from acetyl-CoA to L-homoserine, forming acetyl-L-homoserine. The protein is Homoserine O-acetyltransferase of Lactococcus lactis subsp. cremoris (strain MG1363).